The chain runs to 286 residues: Aquaporin NIP1-3 (286 aa).

The tract at residues 1–44 (MAGGEHGVNGQHEETRAMEEGSRDHQARCENSEQDGGSKSSSNN) is disordered. Basic and acidic residues predominate over residues 11-31 (QHEETRAMEEGSRDHQARCEN). The span at 34 to 44 (QDGGSKSSSNN) shows a compositional bias: polar residues. 2 consecutive transmembrane segments (helical) span residues 56–76 (VIAE…AVAV) and 84–104 (VTFP…VYSV). The NPA 1 signature appears at 113–115 (NPA). 3 consecutive transmembrane segments (helical) span residues 131 to 153 (VPAY…RALF), 172 to 192 (SLAM…GVAT), and 200 to 220 (LAGL…GPIS). Residues 225–227 (NPA) carry the NPA 2 motif. The helical transmembrane segment at 239 to 259 (YTGIWVYIAGPVFGAVAGAWA) threads the bilayer.

The protein belongs to the MIP/aquaporin (TC 1.A.8) family. NIP (TC 1.A.8.12) subfamily.

It localises to the membrane. Functionally, aquaporins facilitate the transport of water and small neutral solutes across cell membranes. This chain is Aquaporin NIP1-3 (NIP1-3), found in Oryza sativa subsp. japonica (Rice).